Here is a 194-residue protein sequence, read N- to C-terminus: CMRF35-like molecule 5 (194 aa).

A signal peptide spans 1–18; sequence MWLSPSLLLLILPGYSIA. An Ig-like V-type domain is found at 19–125; that stretch reads AKITGPTTVN…LGVKVQVTIN (107 aa). The Extracellular segment spans residues 19-165; it reads AKITGPTTVN…LTRSPLKSTH (147 aa). A glycan (N-linked (GlcNAc...) asparagine) is linked at asparagine 28. Cysteine 39 and cysteine 107 are oxidised to a cystine. A helical transmembrane segment spans residues 166-186; it reads FLFLFLLELPLLLSMLGTVLW. Over 187 to 194 the chain is Cytoplasmic; it reads VNRPQRRS.

This sequence belongs to the CD300 family. Forms complexes with the CD300 family members with exception of CD300c. In terms of processing, N-glycosylated. Expression seems restricted to cells of myeloid lineage.

The protein resides in the cell membrane. The sequence is that of CMRF35-like molecule 5 (CD300LD) from Homo sapiens (Human).